Consider the following 1049-residue polypeptide: Protein phosphatase 1 regulatory subunit 12A (1049 aa).

6 ANK repeats span residues Asp-39 to Tyr-68, Asp-72 to Gln-101, Glu-105 to Val-134, Glu-138 to Val-164, Ser-198 to Ile-227, and Asp-231 to Val-260. The tract at residues Leu-302–Asp-947 is disordered. The segment covering Ile-303–Val-315 has biased composition (polar residues). Residues Lys-319–Glu-341 are compositionally biased toward basic and acidic residues. Residues Ser-359–Asn-371 are compositionally biased toward acidic residues. Residues Ser-378–Pro-421 are compositionally biased toward low complexity. A compositionally biased stretch (basic and acidic residues) spans Ser-426–Ser-436. The span at Arg-473 to Leu-484 shows a compositional bias: low complexity. Residues Asp-485–Arg-497 show a composition bias toward basic and acidic residues. Positions Ser-545–Thr-564 are enriched in polar residues. The span at Ser-571 to Lys-592 shows a compositional bias: low complexity. The span at Ala-593–Arg-607 shows a compositional bias: polar residues. Positions Ser-620 to Thr-639 are enriched in low complexity. Basic and acidic residues predominate over residues Trp-649–Ser-664. Residues Ala-665 to Val-686 show a composition bias toward low complexity. Over residues Val-702–Arg-711 the composition is skewed to basic and acidic residues. Residues Lys-712–Arg-722 show a composition bias toward basic residues. Over residues Arg-747–Arg-789 the composition is skewed to basic and acidic residues. Low complexity predominate over residues Thr-790–Leu-819. The span at Asn-820 to Thr-829 shows a compositional bias: polar residues. Over residues Ser-835–Ile-863 the composition is skewed to basic and acidic residues. A compositionally biased stretch (basic residues) spans Arg-864–Ser-875. Composition is skewed to basic and acidic residues over residues Pro-890–Ser-906 and Gly-934–Asp-947.

PP1 comprises a catalytic subunit, and one or several targeting or regulatory subunits. Ppp1r12a mediates binding to myosin.

It is found in the cytoplasm. Its function is as follows. Regulates myosin phosphatase activity. This is Protein phosphatase 1 regulatory subunit 12A (ppp1r12a) from Danio rerio (Zebrafish).